The chain runs to 458 residues: Probable threonine--tRNA ligase, cytoplasmic (458 aa).

Residues 41–104 (DPIKITLLPD…EGDCSLEIFG (64 aa)) form the TGS domain.

It belongs to the class-II aminoacyl-tRNA synthetase family.

The protein localises to the cytoplasm. The enzyme catalyses tRNA(Thr) + L-threonine + ATP = L-threonyl-tRNA(Thr) + AMP + diphosphate + H(+). The chain is Probable threonine--tRNA ligase, cytoplasmic from Arabidopsis thaliana (Mouse-ear cress).